The chain runs to 290 residues: UPF0507 protein YML003W (290 aa).

It belongs to the UPF0507 family.

The polypeptide is UPF0507 protein YML003W (Saccharomyces cerevisiae (strain ATCC 204508 / S288c) (Baker's yeast)).